Here is a 267-residue protein sequence, read N- to C-terminus: Kafirin PSK8 (267 aa).

The N-terminal stretch at 1-19 (TKIFALLALHALLVSGTTA) is a signal peptide.

It belongs to the zein family.

Major seed storage prolamin. The chain is Kafirin PSK8 from Sorghum bicolor (Sorghum).